We begin with the raw amino-acid sequence, 509 residues long: 3-octaprenyl-4-hydroxybenzoate carboxy-lyase (509 aa).

Asparagine 179 contacts Mn(2+). Residues 182 to 184, 196 to 198, and 201 to 202 contribute to the prenylated FMN site; these read IYR, RWL, and RG. Glutamate 245 contributes to the Mn(2+) binding site. Aspartate 304 functions as the Proton donor in the catalytic mechanism.

This sequence belongs to the UbiD family. As to quaternary structure, homohexamer. Prenylated FMN is required as a cofactor. Requires Mn(2+) as cofactor.

The protein resides in the cell membrane. It catalyses the reaction a 4-hydroxy-3-(all-trans-polyprenyl)benzoate + H(+) = a 2-(all-trans-polyprenyl)phenol + CO2. The protein operates within cofactor biosynthesis; ubiquinone biosynthesis. Functionally, catalyzes the decarboxylation of 3-octaprenyl-4-hydroxy benzoate to 2-octaprenylphenol, an intermediate step in ubiquinone biosynthesis. This is 3-octaprenyl-4-hydroxybenzoate carboxy-lyase from Cupriavidus pinatubonensis (strain JMP 134 / LMG 1197) (Cupriavidus necator (strain JMP 134)).